The chain runs to 206 residues: Elongation factor Ts (206 aa).

The interval 81-84 (TDFV) is involved in Mg(2+) ion dislocation from EF-Tu.

The protein belongs to the EF-Ts family.

It is found in the cytoplasm. In terms of biological role, associates with the EF-Tu.GDP complex and induces the exchange of GDP to GTP. It remains bound to the aminoacyl-tRNA.EF-Tu.GTP complex up to the GTP hydrolysis stage on the ribosome. In Maridesulfovibrio salexigens (strain ATCC 14822 / DSM 2638 / NCIMB 8403 / VKM B-1763) (Desulfovibrio salexigens), this protein is Elongation factor Ts.